The chain runs to 253 residues: Indole-3-glycerol phosphate synthase (253 aa).

This sequence belongs to the TrpC family.

It catalyses the reaction 1-(2-carboxyphenylamino)-1-deoxy-D-ribulose 5-phosphate + H(+) = (1S,2R)-1-C-(indol-3-yl)glycerol 3-phosphate + CO2 + H2O. The protein operates within amino-acid biosynthesis; L-tryptophan biosynthesis; L-tryptophan from chorismate: step 4/5. The polypeptide is Indole-3-glycerol phosphate synthase (Bacillus mycoides (strain KBAB4) (Bacillus weihenstephanensis)).